A 117-amino-acid polypeptide reads, in one-letter code: uncharacterized protein (117 aa).

This is an uncharacterized protein from Microplitis demolitor bracovirus (isolate Webb) (MdBV).